Here is a 360-residue protein sequence, read N- to C-terminus: N5-carboxyaminoimidazole ribonucleotide synthase (360 aa).

ATP-binding positions include arginine 98, lysine 138, 143–149 (GYDGKGQ), 173–176 (EGFV), glutamate 181, histidine 204, and 255–256 (NE). An ATP-grasp domain is found at 102 to 285 (KSMFKDLGIP…QFENHLRAVA (184 aa)).

Belongs to the PurK/PurT family. Homodimer.

The catalysed reaction is 5-amino-1-(5-phospho-beta-D-ribosyl)imidazole + hydrogencarbonate + ATP = 5-carboxyamino-1-(5-phospho-D-ribosyl)imidazole + ADP + phosphate + 2 H(+). Its pathway is purine metabolism; IMP biosynthesis via de novo pathway; 5-amino-1-(5-phospho-D-ribosyl)imidazole-4-carboxylate from 5-amino-1-(5-phospho-D-ribosyl)imidazole (N5-CAIR route): step 1/2. Functionally, catalyzes the ATP-dependent conversion of 5-aminoimidazole ribonucleotide (AIR) and HCO(3)(-) to N5-carboxyaminoimidazole ribonucleotide (N5-CAIR). In Pseudomonas aeruginosa (strain ATCC 15692 / DSM 22644 / CIP 104116 / JCM 14847 / LMG 12228 / 1C / PRS 101 / PAO1), this protein is N5-carboxyaminoimidazole ribonucleotide synthase.